The sequence spans 134 residues: Profilin-2 (134 aa).

An intrachain disulfide couples Cys13 to Cys118. The Involved in PIP2 interaction motif lies at 84–100; it reads AVIRGKKGSGGITIKKT. Thr114 carries the post-translational modification Phosphothreonine.

This sequence belongs to the profilin family. As to quaternary structure, occurs in many kinds of cells as a complex with monomeric actin in a 1:1 ratio. In terms of processing, phosphorylated by MAP kinases.

The protein localises to the cytoplasm. Its subcellular location is the cytoskeleton. Functionally, binds to actin and affects the structure of the cytoskeleton. At high concentrations, profilin prevents the polymerization of actin, whereas it enhances it at low concentrations. The sequence is that of Profilin-2 from Olea europaea (Common olive).